Consider the following 84-residue polypeptide: Turripeptide IX-03 (84 aa).

Residues 1-21 (MGFYMLLTVALLLTSLMNVEA) form the signal peptide. Positions 22–39 (TPVDQAERSALEKSGLGN) are excised as a propeptide. Cystine bridges form between Cys-48-Cys-70, Cys-55-Cys-74, and Cys-60-Cys-81.

Expressed by the venom duct.

Its subcellular location is the secreted. The sequence is that of Turripeptide IX-03 from Gemmula speciosa (Splendid gem-turris).